A 182-amino-acid chain; its full sequence is Ribosome-recycling factor (182 aa).

The tract at residues 136–160 is disordered; sequence VKKSEKDGDLSEDQSRDEQEKIQKE.

The protein belongs to the RRF family.

It is found in the cytoplasm. In terms of biological role, responsible for the release of ribosomes from messenger RNA at the termination of protein biosynthesis. May increase the efficiency of translation by recycling ribosomes from one round of translation to another. This Prochlorococcus marinus (strain NATL1A) protein is Ribosome-recycling factor.